The primary structure comprises 337 residues: ATP-dependent (S)-NAD(P)H-hydrate dehydratase (337 aa).

Ser6 carries the post-translational modification Phosphoserine. The YjeF C-terminal domain occupies 11–335; it reads IKLAQKRCIP…DRVGEVFAKL (325 aa). Residues Gly121 and 182–188 each bind (6S)-NADPHX; that span reads NVVEFKR. ATP contacts are provided by residues 218 to 222 and 240 to 249; these read KGQSD and GSNKRVGGQG. Positions 224-246 are disordered; it reads IFSPDSEKDMLTNSEEGSNKRVG. Asp250 is a binding site for (6S)-NADPHX.

Belongs to the NnrD/CARKD family. The cofactor is Mg(2+).

It localises to the cytoplasm. It catalyses the reaction (6S)-NADHX + ATP = ADP + phosphate + NADH + H(+). The catalysed reaction is (6S)-NADPHX + ATP = ADP + phosphate + NADPH + H(+). In terms of biological role, catalyzes the dehydration of the S-form of NAD(P)HX at the expense of ATP, which is converted to ADP. Together with NAD(P)HX epimerase, which catalyzes the epimerization of the S- and R-forms, the enzyme allows the repair of both epimers of NAD(P)HX, a damaged form of NAD(P)H that is a result of enzymatic or heat-dependent hydration. The sequence is that of ATP-dependent (S)-NAD(P)H-hydrate dehydratase from Saccharomyces cerevisiae (strain ATCC 204508 / S288c) (Baker's yeast).